The following is a 711-amino-acid chain: Toxin RTX-III translocation ATP-binding protein (711 aa).

The 129-residue stretch at 1 to 129 (MESQMPFNEK…EIFQGGMILI (129 aa)) folds into the Peptidase C39 domain. The active site involves H87. An ABC transmembrane type-1 domain is found at 158-440 (FVETIIVSIF…LAQLWQDFQQ (283 aa)). 5 consecutive transmembrane segments (helical) span residues 162 to 182 (IIVSIFLQLFALITPLFFQVV), 195 to 215 (LNVITVALSVVVIFEIVLSGL), 273 to 293 (ALTSVLDLLFSFIFFAVMWYY), 299 to 319 (IVILLSLPCYIAWSIFISPIL), and 392 to 412 (VMIINLWLGAHLVISGDLSIG). In terms of domain architecture, ABC transporter spans 472–707 (IAFKHIRFRY…ENGLYYYLNQ (236 aa)). 506 to 513 (GRSGSGKS) is an ATP binding site.

Belongs to the ABC transporter superfamily. Protein-1 exporter (TC 3.A.1.109) family. In terms of assembly, homodimer.

The protein resides in the cell membrane. Functionally, involved in the transport of the toxin RTX-III. The chain is Toxin RTX-III translocation ATP-binding protein (apxIIIB) from Actinobacillus pleuropneumoniae (Haemophilus pleuropneumoniae).